A 353-amino-acid chain; its full sequence is Heterogeneous nuclear ribonucleoprotein D0 (353 aa).

A disordered region spans residues Met1–Thr89. N-acetylserine is present on Ser2. Residues Ala11–Gly42 are compositionally biased toward low complexity. Positions Ser43–Gly56 are enriched in gly residues. The segment covering Glu62–Asn71 has biased composition (basic and acidic residues). Ser69 is subject to Phosphoserine. A Glycyl lysine isopeptide (Lys-Gly) (interchain with G-Cter in SUMO2) cross-link involves residue Lys70. Ser78, Ser80, and Ser81 each carry phosphoserine. Thr89 bears the Phosphothreonine mark. RRM domains follow at residues Trp95–Glu177 and Lys180–Glu259. An N6-methyllysine modification is found at Lys117. Phosphothreonine is present on Thr125. Lys127 participates in a covalent cross-link: Glycyl lysine isopeptide (Lys-Gly) (interchain with G-Cter in SUMO2). Lys163 is modified (N6-acetyllysine). Residue Ser188 is modified to Phosphoserine. The residue at position 191 (Thr191) is a Phosphothreonine. Lys195 participates in a covalent cross-link: Glycyl lysine isopeptide (Lys-Gly) (interchain with G-Cter in SUMO2). N6-acetyllysine occurs at positions 241 and 249. At Ser269 the chain carries Phosphoserine. Omega-N-methylarginine is present on residues Arg270, Arg276, Arg278, and Arg280. The residue at position 343 (Arg343) is an Asymmetric dimethylarginine; alternate. The residue at position 343 (Arg343) is a Dimethylated arginine; alternate. Position 343 is an omega-N-methylarginine; alternate (Arg343).

As to quaternary structure, identified in a IGF2BP1-dependent mRNP granule complex containing untranslated mRNAs. Part of a complex associated with the FOS mCRD domain and consisting of PABPC1, PAIP1, CSDE1/UNR and SYNCRIP. Interacts with IGF2BP2. Interacts with GTPBP1. Interacts with EIF4G1; the interaction requires RNA. Interacts with EIF3B and RPS3. In terms of processing, methylated by PRMT1, in an insulin-dependent manner. The PRMT1-mediated methylation regulates its phosphorylation. Post-translationally, arg-343 is dimethylated, probably to asymmetric dimethylarginine.

Its subcellular location is the nucleus. It localises to the cytoplasm. In terms of biological role, binds with high affinity to RNA molecules that contain AU-rich elements (AREs) found within the 3'-UTR of many proto-oncogenes and cytokine mRNAs. Also binds to double- and single-stranded DNA sequences in a specific manner and functions a transcription factor. Each of the RNA-binding domains specifically can bind solely to a single-stranded non-monotonous 5'-UUAG-3' sequence and also weaker to the single-stranded 5'-TTAGGG-3' telomeric DNA repeat. Binds RNA oligonucleotides with 5'-UUAGGG-3' repeats more tightly than the telomeric single-stranded DNA 5'-TTAGGG-3' repeats. Binding of RRM1 to DNA inhibits the formation of DNA quadruplex structure which may play a role in telomere elongation. May be involved in translationally coupled mRNA turnover. Implicated with other RNA-binding proteins in the cytoplasmic deadenylation/translational and decay interplay of the FOS mRNA mediated by the major coding-region determinant of instability (mCRD) domain. May play a role in the regulation of the rhythmic expression of circadian clock core genes. Directly binds to the 3'UTR of CRY1 mRNA and induces CRY1 rhythmic translation. May also be involved in the regulation of PER2 translation. This Rattus norvegicus (Rat) protein is Heterogeneous nuclear ribonucleoprotein D0 (Hnrnpd).